A 213-amino-acid polypeptide reads, in one-letter code: Protein SRN2 (213 aa).

The 86-residue stretch at 128–213 folds into the VPS37 C-terminal domain; it reads SKYVASWQDY…TWDKQGNLKY (86 aa).

The protein belongs to the VPS37 family. As to quaternary structure, component of the ESCRT-I complex (endosomal sorting complex required for transport I) which consists of STP22, VPS28, SRN2 and MVB12 in a 1:1:1:1 stoichiometry. Interacts with STP22 and MVB12.

It localises to the cytoplasm. The protein localises to the endosome. It is found in the late endosome membrane. Its function is as follows. Component of the ESCRT-I complex, a regulator of vesicular trafficking process. Required for normal endocytic and biosynthetic traffic to the yeast vacuole. This is Protein SRN2 (SRN2) from Saccharomyces cerevisiae (strain ATCC 204508 / S288c) (Baker's yeast).